The primary structure comprises 320 residues: Aspartate carbamoyltransferase catalytic subunit (320 aa).

The carbamoyl phosphate site is built by R53 and T54. An L-aspartate-binding site is contributed by K82. Residues R103, H131, and Q134 each coordinate carbamoyl phosphate. L-aspartate-binding residues include R164 and R227. The carbamoyl phosphate site is built by L266 and P267.

Belongs to the aspartate/ornithine carbamoyltransferase superfamily. ATCase family. As to quaternary structure, heterododecamer (2C3:3R2) of six catalytic PyrB chains organized as two trimers (C3), and six regulatory PyrI chains organized as three dimers (R2).

It carries out the reaction carbamoyl phosphate + L-aspartate = N-carbamoyl-L-aspartate + phosphate + H(+). It functions in the pathway pyrimidine metabolism; UMP biosynthesis via de novo pathway; (S)-dihydroorotate from bicarbonate: step 2/3. Its function is as follows. Catalyzes the condensation of carbamoyl phosphate and aspartate to form carbamoyl aspartate and inorganic phosphate, the committed step in the de novo pyrimidine nucleotide biosynthesis pathway. The chain is Aspartate carbamoyltransferase catalytic subunit from Bifidobacterium longum (strain NCC 2705).